The sequence spans 394 residues: Flap endonuclease 1 (394 aa).

Residues 1–104 (MGIKQLFSII…GELAKRFQRK (104 aa)) form an N-domain region. Position 34 (Asp34) interacts with Mg(2+). Positions 47 and 70 each coordinate DNA. The Mg(2+) site is built by Asp86, Glu158, Glu160, Asp179, and Asp181. The segment at 122–253 (DVEKFSRRTV…STALKLIREH (132 aa)) is I-domain. Glu158 is a DNA binding site. DNA is bound by residues Gly231 and Asp233. A Mg(2+)-binding site is contributed by Asp233. The tract at residues 341–349 (QQARIEGFF) is interaction with PCNA. Residues 356 to 383 (EEEKKAHKRKLEEQAEQKRKKVKEEKKE) show a composition bias toward basic and acidic residues. The interval 356 to 394 (EEEKKAHKRKLEEQAEQKRKKVKEEKKEKAKLKAKPRGA) is disordered. The span at 384–394 (KAKLKAKPRGA) shows a compositional bias: basic residues.

The protein belongs to the XPG/RAD2 endonuclease family. FEN1 subfamily. Interacts with PCNA. Three molecules of FEN1 bind to one PCNA trimer with each molecule binding to one PCNA monomer. PCNA stimulates the nuclease activity without altering cleavage specificity. It depends on Mg(2+) as a cofactor. Phosphorylated. Phosphorylation upon DNA damage induces relocalization to the nuclear plasma.

The protein resides in the nucleus. Its subcellular location is the nucleolus. The protein localises to the nucleoplasm. It is found in the mitochondrion. Structure-specific nuclease with 5'-flap endonuclease and 5'-3' exonuclease activities involved in DNA replication and repair. During DNA replication, cleaves the 5'-overhanging flap structure that is generated by displacement synthesis when DNA polymerase encounters the 5'-end of a downstream Okazaki fragment. It enters the flap from the 5'-end and then tracks to cleave the flap base, leaving a nick for ligation. Also involved in the long patch base excision repair (LP-BER) pathway, by cleaving within the apurinic/apyrimidinic (AP) site-terminated flap. Acts as a genome stabilization factor that prevents flaps from equilibrating into structures that lead to duplications and deletions. Also possesses 5'-3' exonuclease activity on nicked or gapped double-stranded DNA, and exhibits RNase H activity. Also involved in replication and repair of rDNA and in repairing mitochondrial DNA. This Sordaria macrospora (strain ATCC MYA-333 / DSM 997 / K(L3346) / K-hell) protein is Flap endonuclease 1.